Consider the following 164-residue polypeptide: Thiol peroxidase (164 aa).

The 146-residue stretch at 18–163 folds into the Thioredoxin domain; sequence INEGDFAPDF…FDAALAAYKN (146 aa). Residue cysteine 60 is the Cysteine sulfenic acid (-SOH) intermediate of the active site. An intrachain disulfide couples cysteine 60 to cysteine 93.

This sequence belongs to the peroxiredoxin family. Tpx subfamily. Homodimer.

It catalyses the reaction a hydroperoxide + [thioredoxin]-dithiol = an alcohol + [thioredoxin]-disulfide + H2O. Its function is as follows. Thiol-specific peroxidase that catalyzes the reduction of hydrogen peroxide and organic hydroperoxides to water and alcohols, respectively. Plays a role in cell protection against oxidative stress by detoxifying peroxides. The chain is Thiol peroxidase from Staphylococcus aureus (strain MRSA252).